The sequence spans 176 residues: dCTP deaminase (176 aa).

DCTP contacts are provided by residues Arg99–Arg104 and Asp115. Glu125 (proton donor/acceptor) is an active-site residue. Residue Gln163 participates in dCTP binding.

Belongs to the dCTP deaminase family. In terms of assembly, homotrimer.

The catalysed reaction is dCTP + H2O + H(+) = dUTP + NH4(+). It participates in pyrimidine metabolism; dUMP biosynthesis; dUMP from dCTP (dUTP route): step 1/2. Catalyzes the deamination of dCTP to dUTP. The protein is dCTP deaminase of Pyrobaculum aerophilum (strain ATCC 51768 / DSM 7523 / JCM 9630 / CIP 104966 / NBRC 100827 / IM2).